The following is a 115-amino-acid chain: Small ribosomal subunit protein bS16 (115 aa).

The disordered stretch occupies residues 81 to 115 (GLAPKPTYNEQPKKSAPKAKAQERAKAAADAAAAA).

The protein belongs to the bacterial ribosomal protein bS16 family.

This chain is Small ribosomal subunit protein bS16, found in Gluconobacter oxydans (strain 621H) (Gluconobacter suboxydans).